The primary structure comprises 387 residues: Succinate--CoA ligase [ADP-forming] subunit beta (387 aa).

One can recognise an ATP-grasp domain in the interval 9-236 (KELFAKHNVP…RDATDPLELK (228 aa)). ATP contacts are provided by residues Lys-45, 52–54 (GRG), Ser-94, and Glu-99. Mg(2+) is bound by residues Asn-191 and Asp-205. Residues Asn-256 and 318–320 (GIT) contribute to the substrate site.

The protein belongs to the succinate/malate CoA ligase beta subunit family. Heterotetramer of two alpha and two beta subunits. Mg(2+) serves as cofactor.

It catalyses the reaction succinate + ATP + CoA = succinyl-CoA + ADP + phosphate. The enzyme catalyses GTP + succinate + CoA = succinyl-CoA + GDP + phosphate. Its pathway is carbohydrate metabolism; tricarboxylic acid cycle; succinate from succinyl-CoA (ligase route): step 1/1. In terms of biological role, succinyl-CoA synthetase functions in the citric acid cycle (TCA), coupling the hydrolysis of succinyl-CoA to the synthesis of either ATP or GTP and thus represents the only step of substrate-level phosphorylation in the TCA. The beta subunit provides nucleotide specificity of the enzyme and binds the substrate succinate, while the binding sites for coenzyme A and phosphate are found in the alpha subunit. This chain is Succinate--CoA ligase [ADP-forming] subunit beta, found in Mycolicibacterium smegmatis (strain ATCC 700084 / mc(2)155) (Mycobacterium smegmatis).